The primary structure comprises 284 residues: Polyamine aminopropyltransferase (284 aa).

The 236-residue stretch at 2–237 folds into the PABS domain; the sequence is ELWYTEKHTE…GHWLFGFASK (236 aa). Q31 serves as a coordination point for S-methyl-5'-thioadenosine. Residues H62 and D86 each coordinate spermidine. S-methyl-5'-thioadenosine contacts are provided by residues E106 and 137–138; that span reads DG. D155 serves as the catalytic Proton acceptor. 155–158 lines the spermidine pocket; that stretch reads DSTD. An S-methyl-5'-thioadenosine-binding site is contributed by P162.

Belongs to the spermidine/spermine synthase family. Homodimer or homotetramer.

The protein resides in the cytoplasm. It catalyses the reaction S-adenosyl 3-(methylsulfanyl)propylamine + putrescine = S-methyl-5'-thioadenosine + spermidine + H(+). Its pathway is amine and polyamine biosynthesis; spermidine biosynthesis; spermidine from putrescine: step 1/1. Functionally, catalyzes the irreversible transfer of a propylamine group from the amino donor S-adenosylmethioninamine (decarboxy-AdoMet) to putrescine (1,4-diaminobutane) to yield spermidine. The chain is Polyamine aminopropyltransferase from Clostridium botulinum (strain Alaska E43 / Type E3).